The following is a 671-amino-acid chain: MESIEQQLTELRTTLRHHEYLYHVMDAPEIPDVEYDRLMRELRELETKHPELITPDSPTQRVGAAPLAAFSQIRHEVPMLSLDNVFDEESFLAFNKRVQDRLKSNEKVTWCCELKLDGLAVSILYENGVLVSAATRGDGTTGEDITSNVRTIRAIPLKLHGENIPARLEVRGEVFLPQAGFEKINEDARRTGGKVFANPRNAAAGSLRQLDPRITAKRPLTFFCYGVGVLEGGELPDTHLGRLLQFKQWGLPVSDRVTLCESAEEVLAFYHKVEEDRPTLGFDIDGVVIKVNSLAQQERLGFVARAPRWAVAFKFPAQEQMTFVRDVEFQVGRTGAITPVARLEPVHVAGVLVSNATLHNADEIERLGLRIGDKVVIRRAGDVIPQVVNVVLSERPEDTREVVFPTHCPVCGSDVERVEGEAVARCTGGLICGAQRKESLKHFVSRRAMDVDGMGDKIIDQLVEKEYVHTPADLFKLTAGKLTGLERMGPKSAQNVVNALEKAKETTFARFLYALGIREVGEATAAGLAAYFGTLEALEAASIEELQKVPDVGIVVASHVHNFFAEESNRNVISELLAEGVHWPAPIVINAEEIDSPFAGKTVVLTGSLSQMSRDDAKARLVELGAKVAGSVSKKTDLVIAGEAAGSKLAKAQELGIEVIDEAEMLRLLGS.

NAD(+)-binding positions include 32–36 (DVEYD), 81–82 (SL), and glutamate 113. Lysine 115 (N6-AMP-lysine intermediate) is an active-site residue. Residues arginine 136, glutamate 173, lysine 290, and lysine 314 each coordinate NAD(+). Cysteine 408, cysteine 411, cysteine 426, and cysteine 432 together coordinate Zn(2+). The BRCT domain occupies 593–671 (EIDSPFAGKT…EAEMLRLLGS (79 aa)).

The protein belongs to the NAD-dependent DNA ligase family. LigA subfamily. Requires Mg(2+) as cofactor. Mn(2+) serves as cofactor.

The enzyme catalyses NAD(+) + (deoxyribonucleotide)n-3'-hydroxyl + 5'-phospho-(deoxyribonucleotide)m = (deoxyribonucleotide)n+m + AMP + beta-nicotinamide D-nucleotide.. In terms of biological role, DNA ligase that catalyzes the formation of phosphodiester linkages between 5'-phosphoryl and 3'-hydroxyl groups in double-stranded DNA using NAD as a coenzyme and as the energy source for the reaction. It is essential for DNA replication and repair of damaged DNA. This Escherichia coli O17:K52:H18 (strain UMN026 / ExPEC) protein is DNA ligase.